Consider the following 677-residue polypeptide: DNA ligase (677 aa).

NAD(+) is bound by residues 35 to 39 (DAVYD), 84 to 85 (SL), and glutamate 115. Lysine 117 serves as the catalytic N6-AMP-lysine intermediate. The NAD(+) site is built by arginine 138, glutamate 177, lysine 296, and lysine 320. 4 residues coordinate Zn(2+): cysteine 414, cysteine 417, cysteine 432, and cysteine 437. In terms of domain architecture, BRCT spans 599 to 677 (NGILKLNGKT…ETQLLEILEE (79 aa)).

The protein belongs to the NAD-dependent DNA ligase family. LigA subfamily. Mg(2+) serves as cofactor. Requires Mn(2+) as cofactor.

The catalysed reaction is NAD(+) + (deoxyribonucleotide)n-3'-hydroxyl + 5'-phospho-(deoxyribonucleotide)m = (deoxyribonucleotide)n+m + AMP + beta-nicotinamide D-nucleotide.. Its function is as follows. DNA ligase that catalyzes the formation of phosphodiester linkages between 5'-phosphoryl and 3'-hydroxyl groups in double-stranded DNA using NAD as a coenzyme and as the energy source for the reaction. It is essential for DNA replication and repair of damaged DNA. The sequence is that of DNA ligase from Nostoc sp. (strain PCC 7120 / SAG 25.82 / UTEX 2576).